The chain runs to 1395 residues: DNA polymerase II large subunit (1395 aa).

2 disordered regions span residues 279 to 320 (IGKD…PRVE) and 657 to 704 (GNRM…MSDT). The span at 283-312 (EADEGDSAEDANGDDAGEGADDDGGDEADE) shows a compositional bias: acidic residues. 2 stretches are compositionally biased toward basic and acidic residues: residues 661 to 671 (GRPEKSERRDL) and 690 to 700 (DVAKATKHADD).

This sequence belongs to the archaeal DNA polymerase II family. Heterodimer of a large subunit and a small subunit. In terms of processing, this protein undergoes a protein self splicing that involves a post-translational excision of the intervening region (intein) followed by peptide ligation.

The enzyme catalyses DNA(n) + a 2'-deoxyribonucleoside 5'-triphosphate = DNA(n+1) + diphosphate. It catalyses the reaction Exonucleolytic cleavage in the 3'- to 5'-direction to yield nucleoside 5'-phosphates.. Possesses two activities: a DNA synthesis (polymerase) and an exonucleolytic activity that degrades single-stranded DNA in the 3'- to 5'-direction. Has a template-primer preference which is characteristic of a replicative DNA polymerase. This chain is DNA polymerase II large subunit, found in Haloarcula marismortui (strain ATCC 43049 / DSM 3752 / JCM 8966 / VKM B-1809) (Halobacterium marismortui).